We begin with the raw amino-acid sequence, 310 residues long: Small ribosomal subunit biogenesis GTPase RsgA 2 (310 aa).

A CP-type G domain is found at L77 to F238. GTP is bound by residues N126 to D129 and G180 to T188. Residues C262, C267, H269, and C275 each contribute to the Zn(2+) site.

Belongs to the TRAFAC class YlqF/YawG GTPase family. RsgA subfamily. In terms of assembly, monomer. Associates with 30S ribosomal subunit, binds 16S rRNA. The cofactor is Zn(2+).

It localises to the cytoplasm. Functionally, one of several proteins that assist in the late maturation steps of the functional core of the 30S ribosomal subunit. Helps release RbfA from mature subunits. May play a role in the assembly of ribosomal proteins into the subunit. Circularly permuted GTPase that catalyzes slow GTP hydrolysis, GTPase activity is stimulated by the 30S ribosomal subunit. The chain is Small ribosomal subunit biogenesis GTPase RsgA 2 from Bacteroides thetaiotaomicron (strain ATCC 29148 / DSM 2079 / JCM 5827 / CCUG 10774 / NCTC 10582 / VPI-5482 / E50).